Reading from the N-terminus, the 86-residue chain is Large ribosomal subunit protein bL31B (86 aa).

It belongs to the bacterial ribosomal protein bL31 family. Type B subfamily. In terms of assembly, part of the 50S ribosomal subunit.

This is Large ribosomal subunit protein bL31B from Streptococcus pyogenes serotype M1.